The following is a 167-amino-acid chain: Translationally-controlled tumor protein homolog (167 aa).

The region spanning 1–167 is the TCTP domain; sequence MIIYKDIFSG…WKHGIDEEKI (167 aa).

It belongs to the TCTP family.

Its subcellular location is the cytoplasm. The protein resides in the cytoskeleton. Involved in protein synthesis. Involved in microtubule stabilization. The chain is Translationally-controlled tumor protein homolog from Candida glabrata (strain ATCC 2001 / BCRC 20586 / JCM 3761 / NBRC 0622 / NRRL Y-65 / CBS 138) (Yeast).